Here is a 323-residue protein sequence, read N- to C-terminus: Cell division protein ZipA (323 aa).

Over 1-5 (MQELR) the chain is Periplasmic. Residues 6–26 (FVLIVVGALAIAALLFHGLWT) traverse the membrane as a helical segment. The Cytoplasmic segment spans residues 27–323 (SKKEGKAKFG…QIVEFNAANA (297 aa)). Positions 35-92 (FGNKPLGKLDVDQEDKDTPGQERDFAPDPEDDFEIIRKDRKEPDFGMENSFDNKFSSD) are disordered. Basic and acidic residues-rich tracts occupy residues 41-60 (GKLDVDQEDKDTPGQERDFA) and 68-78 (EIIRKDRKEPD).

Belongs to the ZipA family. In terms of assembly, interacts with FtsZ via their C-terminal domains.

The protein localises to the cell inner membrane. Functionally, essential cell division protein that stabilizes the FtsZ protofilaments by cross-linking them and that serves as a cytoplasmic membrane anchor for the Z ring. Also required for the recruitment to the septal ring of downstream cell division proteins. The sequence is that of Cell division protein ZipA from Vibrio campbellii (strain ATCC BAA-1116).